The sequence spans 87 residues: U1-theraphotoxin-Ct1a (87 aa).

The first 23 residues, 1–23 (MKTFTLIAILTCAVLVIFHAAAA), serve as a signal peptide directing secretion. Residues 24–48 (EELEVQDVIQPEDTLTGLATLDEDR) constitute a propeptide that is removed on maturation.

It belongs to the neurotoxin 12 (Hwtx-2) family. 03 (juruin) subfamily. Contains 3 disulfide bonds. Two different connectivities are observed in similar proteins (C1-C3, C2-C5, C4-C6 or C1-C4, C2-C5, C3-C6). Expressed by the venom gland.

The protein resides in the secreted. Functionally, this toxin causes paralysis and death to sheep blowflies. It may inhibit voltage-gated calcium channels. The chain is U1-theraphotoxin-Ct1a from Coremiocnemis tropix (Australian tarantula spider).